Consider the following 160-residue polypeptide: Major pollen allergen Bet v 1-C (160 aa).

Lys-55, Tyr-82, Tyr-84, and Asn-101 together coordinate brassinolide.

Belongs to the BetVI family.

It is found in the cytoplasm. Functionally, may be a general steroid carrier protein. The sequence is that of Major pollen allergen Bet v 1-C (BETV1C) from Betula pendula (European white birch).